A 158-amino-acid polypeptide reads, in one-letter code: NADPH-dependent 7-cyano-7-deazaguanine reductase (158 aa).

The active-site Thioimide intermediate is the cysteine 56. The active-site Proton donor is aspartate 63. Substrate contacts are provided by residues 78–80 (LES) and 97–98 (HE).

The protein belongs to the GTP cyclohydrolase I family. QueF type 1 subfamily.

The protein localises to the cytoplasm. The catalysed reaction is 7-aminomethyl-7-carbaguanine + 2 NADP(+) = 7-cyano-7-deazaguanine + 2 NADPH + 3 H(+). The protein operates within tRNA modification; tRNA-queuosine biosynthesis. Functionally, catalyzes the NADPH-dependent reduction of 7-cyano-7-deazaguanine (preQ0) to 7-aminomethyl-7-deazaguanine (preQ1). This is NADPH-dependent 7-cyano-7-deazaguanine reductase from Rhodopseudomonas palustris (strain TIE-1).